The sequence spans 705 residues: MLTPIIRKFQYGQHTVTIETGMMARQATAAVMVSMDDTAVFVTVVGQKKAKPGQSFFPLTVNYQERTYAAGRIPGSFFRREGRPSEGETLTSRLIDRPIRPLFPDSFLNEVQVIATVVSVNPQINPDIVALIGASAALSLSGIPFNGPIGAARVGFINDQYVLNPTTDELKESRLDLVVAGTAGAVLMVESEADILSEEQMLGAVVFGHEQQQVVIENINALVAEAGKPKWDWQAEPVNEALHARVAELAEARLGDAYRITEKQERYTQVDAIKADVTEALLAQDDTLDAAEIQDILASVEKNVVRSRVLRGEPRIDGREKDMIRGLDVRTGILPRTHGSALFTRGETQALVTATLGTARDAQNIDELMGERTDSFLLHYNFPPYCVGETGMVGSPKRREIGHGRLAKRGVLAVMPSASEFPYTIRVVSEITESNGSSSMASVCGASLALMDAGVPIKAAVAGIAMGLVKEGDNFVVLSDILGDEDHLGDMDFKVAGSRDGVTALQMDIKIEGITREIMQVALNQAKGARLHILGVMEQAISTPRGDISEFAPRIYTMKINPEKIKDVIGKGGSVIRALTDETGTTIEIEDDGTIKIAATDGDKAKHAIRRIEEITAEIEVGRIYAGKVTRIVDFGAFVAIGGGKEGLVHISQIADKRVEKVTDYLQMGQDVPVKVMEVDRQGRIRLSIKEATTPDAEAPEAAAE.

2 residues coordinate Mg(2+): Asp-486 and Asp-492. Positions 553 to 612 constitute a KH domain; that stretch reads PRIYTMKINPEKIKDVIGKGGSVIRALTDETGTTIEIEDDGTIKIAATDGDKAKHAIRRI. Residues 622–690 enclose the S1 motif domain; it reads GRIYAGKVTR…RQGRIRLSIK (69 aa).

Belongs to the polyribonucleotide nucleotidyltransferase family. In terms of assembly, component of the RNA degradosome, which is a multiprotein complex involved in RNA processing and mRNA degradation. Requires Mg(2+) as cofactor.

The protein resides in the cytoplasm. It carries out the reaction RNA(n+1) + phosphate = RNA(n) + a ribonucleoside 5'-diphosphate. Its function is as follows. Involved in mRNA degradation. Catalyzes the phosphorolysis of single-stranded polyribonucleotides processively in the 3'- to 5'-direction. The protein is Polyribonucleotide nucleotidyltransferase of Yersinia pseudotuberculosis serotype O:3 (strain YPIII).